Reading from the N-terminus, the 35-residue chain is Photosystem II reaction center protein T (35 aa).

The chain crosses the membrane as a helical span at residues Ala3–Phe23.

It belongs to the PsbT family. PSII is composed of 1 copy each of membrane proteins PsbA, PsbB, PsbC, PsbD, PsbE, PsbF, PsbH, PsbI, PsbJ, PsbK, PsbL, PsbM, PsbT, PsbY, PsbZ, Psb30/Ycf12, at least 3 peripheral proteins of the oxygen-evolving complex and a large number of cofactors. It forms dimeric complexes.

The protein resides in the plastid. It is found in the chloroplast thylakoid membrane. In terms of biological role, found at the monomer-monomer interface of the photosystem II (PS II) dimer, plays a role in assembly and dimerization of PSII. PSII is a light-driven water plastoquinone oxidoreductase, using light energy to abstract electrons from H(2)O, generating a proton gradient subsequently used for ATP formation. This chain is Photosystem II reaction center protein T, found in Citrus sinensis (Sweet orange).